We begin with the raw amino-acid sequence, 6668 residues long: Centrosome-associated protein CEP250 (6668 aa).

Coiled-coil stretches lie at residues 562 to 589, 632 to 666, 873 to 988, 1042 to 1087, 1252 to 1307, 1333 to 1427, 1501 to 1538, 1594 to 1688, 1896 to 1930, 1975 to 2224, 2298 to 3272, 3298 to 3436, 3526 to 3599, 3697 to 3773, 3856 to 4137, 4170 to 4486, 4515 to 5078, 5165 to 5202, 5298 to 5731, and 5927 to 6119; these read KAFH…LQQD, TREL…LRAS, HTEC…LRSS, LRMS…HEAA, VEDL…AVSR, LESL…LEKK, RPAA…LGTQ, REAL…SEVA, HDIL…TTEK, EETL…AKQS, AEDE…LKME, QQEL…SRAE, LVQL…AKEE, CASL…EERR, TEML…VEAE, RRKL…LRER, LETL…FRRR, LASL…QETL, LREK…QHRV, and TQAL…LWRQ.

In terms of processing, proteolytically cleaved; only the full-length form localizes to the inner core, while processed version also localizes to the outer core during the onset of cell division.

The protein localises to the cytoplasm. It localises to the cytoskeleton. It is found in the microtubule organizing center. The protein resides in the centrosome. Part of the centrosome inner core complex. Required for the linking of centrosomal inner and outer cores. This chain is Centrosome-associated protein CEP250, found in Toxoplasma gondii (strain ATCC 50611 / Me49).